The chain runs to 598 residues: NADH-quinone oxidoreductase subunit C/D (598 aa).

The tract at residues 1 to 189 is NADH dehydrogenase I subunit C; sequence MTDLTTSDST…DPFVLTKQKE (189 aa). The NADH dehydrogenase I subunit D stretch occupies residues 213-598; it reads DFMFLNLGPN…IDFVMSDVDR (386 aa).

The protein in the N-terminal section; belongs to the complex I 30 kDa subunit family. It in the C-terminal section; belongs to the complex I 49 kDa subunit family. NDH-1 is composed of 13 different subunits. Subunits NuoB, CD, E, F, and G constitute the peripheral sector of the complex.

The protein resides in the cell inner membrane. It catalyses the reaction a quinone + NADH + 5 H(+)(in) = a quinol + NAD(+) + 4 H(+)(out). NDH-1 shuttles electrons from NADH, via FMN and iron-sulfur (Fe-S) centers, to quinones in the respiratory chain. The immediate electron acceptor for the enzyme in this species is believed to be ubiquinone. Couples the redox reaction to proton translocation (for every two electrons transferred, four hydrogen ions are translocated across the cytoplasmic membrane), and thus conserves the redox energy in a proton gradient. In Yersinia enterocolitica serotype O:8 / biotype 1B (strain NCTC 13174 / 8081), this protein is NADH-quinone oxidoreductase subunit C/D.